The primary structure comprises 312 residues: Golgi to ER traffic protein 2 (312 aa).

Residues 1-175 (MSDSPSISAE…VQYNTYRHQV (175 aa)) are Cytoplasmic-facing. A helical transmembrane segment spans residues 176–196 (WKFRFLAVRYFALLANFIYHF). Over 197–224 (YIIGDSISFASSSHQFIRELIPVEPARS) the chain is Lumenal. Residues 225-244 (FFTLFSTIEVVIIASYYFLG) form a helical membrane-spanning segment. Residues 245-288 (TKEGFFSTATSNNFVVKLLDMGSMVLPQLQQFKTIAVRLLGYYE) are Cytoplasmic-facing. Residues 289–309 (LLAVLLGDLSLVVVLFGLHSV) form a helical membrane-spanning segment. At 310–312 (LGN) the chain is on the lumenal side.

Belongs to the GET2 family. Component of the Golgi to ER traffic (GET) complex, which is composed of GET1, GET2 and GET3. Within the complex, GET1 and GET2 form a heterotetramer which is stabilized by phosphatidylinositol binding and which binds to the GET3 homodimer.

It is found in the endoplasmic reticulum membrane. It localises to the golgi apparatus membrane. Its function is as follows. Required for the post-translational delivery of tail-anchored (TA) proteins to the endoplasmic reticulum. Together with GET1, acts as a membrane receptor for soluble GET3, which recognizes and selectively binds the transmembrane domain of TA proteins in the cytosol. The GET complex cooperates with the HDEL receptor ERD2 to mediate the ATP-dependent retrieval of resident ER proteins that contain a C-terminal H-D-E-L retention signal from the Golgi to the ER. In Scheffersomyces stipitis (strain ATCC 58785 / CBS 6054 / NBRC 10063 / NRRL Y-11545) (Yeast), this protein is Golgi to ER traffic protein 2.